Here is a 636-residue protein sequence, read N- to C-terminus: Polyadenylate-binding protein 1 (636 aa).

At Met1 the chain carries N-acetylmethionine. 4 RRM domains span residues 11–89 (ASLY…WSQR), 99–175 (GNIF…RFKS), 191–268 (TNVY…RAQK), and 294–370 (VNLY…LAQR). Positions 166 to 289 (RKVFVGRFKS…FEQMKQDRIT (124 aa)) are CSDE1-binding. N6-methyllysine is present on Lys299. At Ser315 the chain carries Phosphoserine. Thr319 carries the phosphothreonine modification. Residues Arg385, Arg419, Arg432, and Arg436 each carry the omega-N-methylarginine modification. Residues Arg455 and Arg460 each carry the omega-N-methylated arginine; by CARM1 modification. 2 positions are modified to omega-N-methylarginine: Arg475 and Arg481. An Asymmetric dimethylarginine; alternate modification is found at Arg493. Arg493 is modified (dimethylated arginine; alternate). Arg493 carries the omega-N-methylarginine; alternate modification. Arg506 carries the post-translational modification Omega-N-methylarginine. Lys512 carries the N6-acetyllysine modification. Arg518 carries the omega-N-methylarginine modification. The PABC domain maps to 542 to 619 (QEPLTASMLA…AVAVLQAHQA (78 aa)).

This sequence belongs to the polyadenylate-binding protein type-1 family. As to quaternary structure, may form homodimers. Component of a multisubunit autoregulatory ribonucleoprotein complex (ARC), at least composed of IGF2BP1, PABPC1 and CSDE1. Directly interacts with IGF2BP1. Part of a complex associated with the FOS mCRD domain and consisting of HNRPD, SYNCRIP, PAIP1 and CSDE1/UNR. Interacts with PAIP1 and PAIP2 (via the PABPC1-interacting motifs PAM1 and PAM2). Interacts with PAIP1 with a 1:1 stoichiometry and with PAIP2 with a 1:2 stoichiometry. The interaction with CSDE1 is direct and RNA-independent. Found in a mRNP complex with YBX2. Interacts with TENT2/GLD2. Identified in the spliceosome C complex. Identified in a mRNP complex, at least composed of DHX9, DDX3X, ELAVL1, HNRNPU, IGF2BP1, ILF3, PABPC1, PCBP2, PTBP2, STAU1, STAU2, SYNCRIP and YBX1. The interaction with DDX3X is direct and RNA-independent. This interaction increases in stressed cells and decreases during cell recovery. Identified in a IGF2BP1-dependent mRNP granule complex containing untranslated mRNAs. Interacts with NXF1/TAP. Interacts with PIWIL1. Interacts with AGO1, AGO2, GSPT1 and GSPT2. Interacts with LARP4B. Interacts (via the second and third RRM domains and the C-terminus) with PAIP2B (via central acidic portion and C-terminus). Forms a complex with LARP1 and SHFL. Interacts with LARP4. Interacts with ZFC3H1 in a RNase-sensitive manner. Interacts with TRIM71 (via NHL repeats) in an RNA-dependent manner. Interacts with TENT5C; the interaction has no effect on TENT5C poly(A) polymerase function. Interacts with G3BP1 and G3BP2. Interacts with ENDOV; the interaction is RNA-dependent and stimulates ENDOV activity. Interacts with UPF1; the interaction is RNA-dependent. Interacts with IGF2BP2 and IGF2BP3. May interact with SETX. Interacts with RBM46. Interacts with PAN3. Post-translationally, phosphorylated by MAPKAPK2. In terms of processing, methylated by CARM1. Arg-493 is dimethylated, probably to asymmetric dimethylarginine.

It localises to the cytoplasm. Its subcellular location is the stress granule. The protein resides in the nucleus. It is found in the cell projection. The protein localises to the lamellipodium. Binds the poly(A) tail of mRNA, including that of its own transcript, and regulates processes of mRNA metabolism such as pre-mRNA splicing and mRNA stability. Its function in translational initiation regulation can either be enhanced by PAIP1 or repressed by PAIP2. Can probably bind to cytoplasmic RNA sequences other than poly(A) in vivo. Binds to N6-methyladenosine (m6A)-containing mRNAs and contributes to MYC stability by binding to m6A-containing MYC mRNAs. Involved in translationally coupled mRNA turnover. Implicated with other RNA-binding proteins in the cytoplasmic deadenylation/translational and decay interplay of the FOS mRNA mediated by the major coding-region determinant of instability (mCRD) domain. Involved in regulation of nonsense-mediated decay (NMD) of mRNAs containing premature stop codons; for the recognition of premature termination codons (PTC) and initiation of NMD a competitive interaction between UPF1 and PABPC1 with the ribosome-bound release factors is proposed. By binding to long poly(A) tails, may protect them from uridylation by ZCCHC6/ZCCHC11 and hence contribute to mRNA stability. This Pongo abelii (Sumatran orangutan) protein is Polyadenylate-binding protein 1 (PABPC1).